The chain runs to 195 residues: Calcineurin B homologous protein 1 (195 aa).

A lipid anchor (N-myristoyl glycine) is attached at glycine 2. Positions 2–6 match the Necessary for association with microtubule and interaction with GAPDH motif; that stretch reads GSRAS. EF-hand domains are found at residues 26-61, 66-101, 110-145, and 151-186; these read SQIT…AINP, IINA…KSKD, SRSN…MVGV, and QLGS…VDVE. Positions 123, 125, 127, 129, and 134 each coordinate Ca(2+). The Nuclear export signal 1 signature appears at 138–147; the sequence is VLRMMVGVNI. Ca(2+)-binding residues include aspartate 164, aspartate 166, aspartate 168, and glutamate 175. The short motif at 176 to 185 is the Nuclear export signal 2 element; the sequence is FVKVLEKVDV.

This sequence belongs to the calcineurin regulatory subunit family. CHP subfamily. In terms of assembly, monomer. Interacts with STK17B; the interaction occurs in a calcium-independent manner and induces the translocation of CHP1 from the Golgi to the nucleus. Interacts with GAPDH; the interaction is direct, occurs in a N-myristoylation-dependent manner and facilitates the ability of CHP1 to bind microtubules. Interacts with KIF1B (via the C-terminal end of the kinesin-motor domain); the interaction occurs in a calcium-dependent manner. Associates (via C-terminal domain) with microtubules; the association occurs with polymerized microtubules during the cell cycle in a myristoylation- and calcium-independent manner and is enhanced by GAPDH. Interacts with PPP3CA. Interacts with SLC9A1/NHE1 (via the cytoplasmic C-terminal domain); the interaction occurs at the plasma membrane in a calcium-dependent manner and at a domain that is critical for growth factor stimulation of the exchanger. Interacts with SLC9A3; increases SLC9A3 trafficking and activity at the plasma membrane. Phosphorylated; decreased phosphorylation is associated with an increase in SLC9A1/NHE1 Na(+)/H(+) exchange activity. Phosphorylation occurs in serum-dependent manner. The phosphorylation state may regulate the binding to SLC9A1/NHE1. Post-translationally, both N-myristoylation and calcium-mediated conformational changes are essential for its function in exocytic traffic. N-myristoylation is required for its association with microtubules and interaction with GAPDH, but not for the constitutive association to membranes.

Its subcellular location is the nucleus. The protein resides in the cytoplasm. It localises to the cytoskeleton. The protein localises to the endomembrane system. It is found in the endoplasmic reticulum-Golgi intermediate compartment. Its subcellular location is the endoplasmic reticulum. The protein resides in the cell membrane. It localises to the membrane. In terms of biological role, calcium-binding protein involved in different processes such as regulation of vesicular trafficking, plasma membrane Na(+)/H(+) exchanger and gene transcription. Involved in the constitutive exocytic membrane traffic. Mediates the association between microtubules and membrane-bound organelles of the endoplasmic reticulum and Golgi apparatus and is also required for the targeting and fusion of transcytotic vesicles (TCV) with the plasma membrane. Functions as an integral cofactor in cell pH regulation by controlling plasma membrane-type Na(+)/H(+) exchange activity. Affects the pH sensitivity of SLC9A1/NHE1 by increasing its sensitivity at acidic pH. Required for the stabilization and localization of SLC9A1/NHE1 at the plasma membrane. Inhibits serum- and GTPase-stimulated Na(+)/H(+) exchange. Plays a role as an inhibitor of ribosomal RNA transcription by repressing the nucleolar UBF1 transcriptional activity. May sequester UBF1 in the nucleoplasm and limit its translocation to the nucleolus. Associates to the ribosomal gene promoter. Acts as a negative regulator of the calcineurin/NFAT signaling pathway. Inhibits NFAT nuclear translocation and transcriptional activity by suppressing the calcium-dependent calcineurin phosphatase activity. Also negatively regulates the kinase activity of the apoptosis-induced kinase STK17B. Inhibits both STK17B auto- and substrate-phosphorylations in a calcium-dependent manner. The protein is Calcineurin B homologous protein 1 (CHP1) of Bos taurus (Bovine).